The primary structure comprises 334 residues: MKTYYTSLKKFHTFKINVFAKKIIIVKTIKTLIKTWKKCNQENLPFLLLGKGSNVLFTKNYNGFVVVNRISGITIHEQKDYWLLHVKGGTKWNNLVKYTIQKKIYGLENLALIPGTVGAAPIQNIGAYGVEFKDVCQYVDVLYLNNSKIVRINSNNCLFGYRDSIFKKKHNPNSIILSVGIKLPKTWKPKISHLELQKLSFKNITSHQIFHYICKLRKKKLPNPKKIGNAGSFFKNPIIKKNKAHKIICEYKDLPFYPEPHGMIKLSAGWLIEKCKLKNFSVGNAKIYHKQALILINKNNLATSKNIIKLAKIIISKVKKKFDITLELEVQIIN.

One can recognise an FAD-binding PCMH-type domain in the interval 16-186 (INVFAKKIII…LSVGIKLPKT (171 aa)). Residue Arg162 is part of the active site. The Proton donor role is filled by Ser232. Residue Glu329 is part of the active site.

Belongs to the MurB family. It depends on FAD as a cofactor.

It is found in the cytoplasm. The catalysed reaction is UDP-N-acetyl-alpha-D-muramate + NADP(+) = UDP-N-acetyl-3-O-(1-carboxyvinyl)-alpha-D-glucosamine + NADPH + H(+). Its pathway is cell wall biogenesis; peptidoglycan biosynthesis. Functionally, cell wall formation. This Buchnera aphidicola subsp. Baizongia pistaciae (strain Bp) protein is UDP-N-acetylenolpyruvoylglucosamine reductase.